The primary structure comprises 1129 residues: Serine/threonine-protein kinase LATS1 (1129 aa).

A compositionally biased stretch (basic and acidic residues) spans 1 to 11; it reads MKRGEKPEGYR. The disordered stretch occupies residues 1-71; that stretch reads MKRGEKPEGY…PRQVRNPPKF (71 aa). The span at 19–30 shows a compositional bias: polar residues; the sequence is PASNYPGSSRQM. Over residues 46-64 the composition is skewed to basic and acidic residues; that stretch reads DASKAEHNLNKMSTEDPRQ. Positions 100–141 constitute a UBA domain; that stretch reads EVNPQMFQDLQAAGFDEDMVIQALQKTNNRSIEAAVEFISKM. 2 disordered regions span residues 148 to 216 and 228 to 276; these read REQM…RPLS and PSNG…QTKR. Residues 235–268 show a composition bias toward pro residues; it reads NPPPPPQVRSVTPPPPPRGQTPPPRGTTPPPPSW. Thr-246 is modified (phosphothreonine). Ser-278 is modified (phosphoserine). Disordered stretches follow at residues 292-317, 363-407, 432-492, and 513-630; these read PPGA…SQAQ, PTGS…VPQS, WPQS…TPAP, and PTHP…ESRI. The segment covering 300-312 has biased composition (pro residues); the sequence is YPPPPLTTSPMNP. The PPxY motif 1 signature appears at 372–375; it reads PPPY. Residues 380–392 are compositionally biased toward polar residues; it reads ANGQSPSALQTGA. Over residues 433–445 the composition is skewed to low complexity; the sequence is PQSSSAPAQSSPS. Polar residues predominate over residues 453–481; it reads WQPNIPVRSNSFNNPLGSRASHSANSQPS. Phosphoserine; by NUAK1 and NUAK2 is present on Ser-463. 2 stretches are compositionally biased toward low complexity: residues 482-492 and 520-530; these read ATTVTAITPAP and PQPVQTVQPTP. Positions 525 to 654 are interaction with YAP1; the sequence is TVQPTPFSEG…HVENVLKSHQ (130 aa). The short motif at 555–558 is the PPxY motif 2 element; the sequence is PPPY. Residues 578–608 are compositionally biased toward basic and acidic residues; sequence PCKDEQPSLPKEDDSEKSADSGDSGDKEKKQ. The residue at position 612 (Ser-612) is a Phosphoserine. The span at 620–629 shows a compositional bias: basic and acidic residues; it reads KKDEERRESR. Position 673 is a phosphoserine (Ser-673). One can recognise a Protein kinase domain in the interval 704 to 1009; the sequence is FVKIKTLGIG…ADEIKAHPFF (306 aa). ATP contacts are provided by residues 710–718 and Lys-733; that span reads LGIGAFGEV. The Proton acceptor role is filled by Asp-827. A Phosphoserine; by STK3/MST2 modification is found at Ser-908. The 80-residue stretch at 1010–1089 folds into the AGC-kinase C-terminal domain; it reads KTIDFSSDLR…RRFFDDNGYP (80 aa). Thr-1078 carries the post-translational modification Phosphothreonine; by STK3/MST2. Residues 1104–1129 are disordered; the sequence is QGSEQQSDEDDQHTSSDGNNRDLVYV.

The protein belongs to the protein kinase superfamily. AGC Ser/Thr protein kinase family. Complexes with CDK1 in early mitosis. LATS1-associated CDK1 has no mitotic cyclin partner and no apparent kinase activity. Binds phosphorylated ZYX, locating this protein to the mitotic spindle and suggesting a role for actin regulatory proteins during mitosis. Binds to and colocalizes with LIMK1 at the actomyosin contractile ring during cytokinesis. Interacts (via PPxY motif 2) with YAP1 (via WW domains). Interacts with MOB1A and MOB1B. Interacts with LIMD1, WTIP and AJUBA. Interacts with ESR1, DCAF1 and DCAF13; probably recruits DCAF1 and DCAF13 to ESR1 to promote ESR1 ubiquitination and ubiquitin-mediated proteasomal degradation. Interacts with STK3/MST2; this interaction is inhibited in the presence of DLG5. Interacts with SCRIB in the presence of DLG5. Interacts with WWTR1/TAZ. Interacts with WWC1, WWC2 and WWC3 (via their WW domains). Mg(2+) is required as a cofactor. In terms of processing, autophosphorylated and phosphorylated during M-phase of the cell cycle. Phosphorylated by STK3/MST2 at Ser-908 and Thr-1078, which results in its activation. Phosphorylated by MAP4Ks; in parallel to STK3/MST2 and resulting to its activation. Phosphorylation at Ser-463 by NUAK1 and NUAK2 leads to decreased protein level and is required to regulate cellular senescence and cellular ploidy.

It localises to the cytoplasm. The protein localises to the cytoskeleton. It is found in the microtubule organizing center. The protein resides in the centrosome. Its subcellular location is the spindle. It localises to the midbody. The protein localises to the spindle pole body. The enzyme catalyses L-seryl-[protein] + ATP = O-phospho-L-seryl-[protein] + ADP + H(+). The catalysed reaction is L-threonyl-[protein] + ATP = O-phospho-L-threonyl-[protein] + ADP + H(+). Its function is as follows. Negative regulator of YAP1 in the Hippo signaling pathway that plays a pivotal role in organ size control and tumor suppression by restricting proliferation and promoting apoptosis. The core of this pathway is composed of a kinase cascade wherein STK3/MST2 and STK4/MST1, in complex with its regulatory protein SAV1, phosphorylates and activates LATS1/2 in complex with its regulatory protein MOB1, which in turn phosphorylates and inactivates YAP1 oncoprotein and WWTR1/TAZ. Phosphorylation of YAP1 by LATS1 inhibits its translocation into the nucleus to regulate cellular genes important for cell proliferation, cell death, and cell migration. Acts as a tumor suppressor which plays a critical role in maintenance of ploidy through its actions in both mitotic progression and the G1 tetraploidy checkpoint. Negatively regulates G2/M transition by down-regulating CDK1 kinase activity. Involved in the control of p53 expression. Affects cytokinesis by regulating actin polymerization through negative modulation of LIMK1. May also play a role in endocrine function. Plays a role in mammary gland epithelial cell differentiation, both through the Hippo signaling pathway and the intracellular estrogen receptor signaling pathway by promoting the degradation of ESR1. Acts as an activator of the NLRP3 inflammasome by mediating phosphorylation of 'Ser-265' of NLRP3 following NLRP3 palmitoylation, promoting NLRP3 activation by NEK7. In Mus musculus (Mouse), this protein is Serine/threonine-protein kinase LATS1.